A 395-amino-acid polypeptide reads, in one-letter code: MNFQRMTDLNLAGKRVLIREDLNVPVKNGVITSDARLRAALPTIKAALEKGAAVMVFSHLGRPVEGEPKPEQSLALVAAYLTEALGQEVKLFTDYLDGVEVEAGQVVLLENVRFNPGEKKNNPELAQKYAALCDVFVMDAFGTAHRAEASTEGVARFAPVAAAGPLLAAELDALGRAMQTPEKPMVAIVAGSKVSTKLDVLNSLSGICDQLIVGGGIANTFLAAAGYNVGKSLYEADLVETAKQIAAKVSVPLPTDVVVADASQINFEDFLGSLAAAQAVIKKVEDVTANDMILDVGPETAKAFANILTTSKTILWNGPVGVFEVDQFGEGTKALSLAVAQSDAFSIAGGGDTLAAIDKYNVADQIGYISTGGGAFLEFVEGKTLPAVAVLLERA.

Residues 21 to 23, arginine 36, 59 to 62, arginine 113, and arginine 146 contribute to the substrate site; these read DLN and HLGR. ATP-binding positions include lysine 197, glutamate 324, and 350-353; that span reads GGDT.

This sequence belongs to the phosphoglycerate kinase family. In terms of assembly, monomer.

It is found in the cytoplasm. It carries out the reaction (2R)-3-phosphoglycerate + ATP = (2R)-3-phospho-glyceroyl phosphate + ADP. It functions in the pathway carbohydrate degradation; glycolysis; pyruvate from D-glyceraldehyde 3-phosphate: step 2/5. This is Phosphoglycerate kinase from Acinetobacter baumannii (strain ATCC 17978 / DSM 105126 / CIP 53.77 / LMG 1025 / NCDC KC755 / 5377).